The primary structure comprises 1155 residues: ATP-dependent helicase/deoxyribonuclease subunit B (1155 aa).

8-15 (GRSGSGKS) is an ATP binding site. [4Fe-4S] cluster-binding residues include Cys-793, Cys-1115, Cys-1118, and Cys-1124.

It belongs to the helicase family. AddB/RexB type 1 subfamily. In terms of assembly, heterodimer of AddA and AddB. It depends on Mg(2+) as a cofactor. [4Fe-4S] cluster serves as cofactor.

In terms of biological role, the heterodimer acts as both an ATP-dependent DNA helicase and an ATP-dependent, dual-direction single-stranded exonuclease. Recognizes the chi site generating a DNA molecule suitable for the initiation of homologous recombination. The AddB subunit has 5' -&gt; 3' nuclease activity but not helicase activity. The protein is ATP-dependent helicase/deoxyribonuclease subunit B of Clostridioides difficile (strain 630) (Peptoclostridium difficile).